The chain runs to 260 residues: NAD-capped RNA hydrolase NudC (260 aa).

The substrate site is built by K25 and R69. The Zn(2+) site is built by C98 and C101. Position 111 (E111) interacts with substrate. Residues C116 and C119 each coordinate Zn(2+). Substrate is bound at residue Y124. The Nudix hydrolase domain maps to P125 to T248. A divalent metal cation contacts are provided by A158, E174, and E178. The short motif at G159–N180 is the Nudix box element. Q192–S199 provides a ligand contact to substrate. E219 provides a ligand contact to a divalent metal cation. A241 provides a ligand contact to substrate.

This sequence belongs to the Nudix hydrolase family. NudC subfamily. In terms of assembly, homodimer. The cofactor is Mg(2+). Requires Mn(2+) as cofactor. Zn(2+) is required as a cofactor.

It carries out the reaction a 5'-end NAD(+)-phospho-ribonucleoside in mRNA + H2O = a 5'-end phospho-adenosine-phospho-ribonucleoside in mRNA + beta-nicotinamide D-ribonucleotide + 2 H(+). The enzyme catalyses NAD(+) + H2O = beta-nicotinamide D-ribonucleotide + AMP + 2 H(+). It catalyses the reaction NADH + H2O = reduced beta-nicotinamide D-ribonucleotide + AMP + 2 H(+). Its function is as follows. mRNA decapping enzyme that specifically removes the nicotinamide adenine dinucleotide (NAD) cap from a subset of mRNAs by hydrolyzing the diphosphate linkage to produce nicotinamide mononucleotide (NMN) and 5' monophosphate mRNA. The NAD-cap is present at the 5'-end of some mRNAs and stabilizes RNA against 5'-processing. Has preference for mRNAs with a 5'-end purine. Catalyzes the hydrolysis of a broad range of dinucleotide pyrophosphates. The sequence is that of NAD-capped RNA hydrolase NudC from Yersinia pestis bv. Antiqua (strain Antiqua).